We begin with the raw amino-acid sequence, 176 residues long: Ferritin, spleen middle subunit (176 aa).

Residues 7–156 (QNYHRDCEAA…DFITNLSRMD (150 aa)) form the Ferritin-like diiron domain. Residues Glu-24, Glu-59, His-62, Glu-104, and Gln-138 each contribute to the Fe cation site.

This sequence belongs to the ferritin family. In terms of assembly, in spleen, forms a homomer. The functional molecule forms a roughly spherical shell with a diameter of 12 nm and contains a central cavity into which the insoluble mineral iron core is deposited. In terms of tissue distribution, spleen (at protein level).

The enzyme catalyses 4 Fe(2+) + O2 + 4 H(+) = 4 Fe(3+) + 2 H2O. Functionally, stores iron in a soluble, non-toxic, readily available form. Important for iron homeostasis. Has ferroxidase activity. Iron is taken up in the ferrous form and deposited as ferric hydroxides after oxidation. The sequence is that of Ferritin, spleen middle subunit from Trematomus bernacchii (Emerald rockcod).